The primary structure comprises 459 residues: Transcription factor mlcR (459 aa).

Positions 21-53 form a DNA-binding region, zn(2)-C6 fungal-type; the sequence is CDRCHAQKLKCTGSNANLVRAQCQRCQQAGLRC. Disordered regions lie at residues 64–84 and 135–170; these read LHKE…PMTA and DPES…DFEG. The segment covering 69–78 has biased composition (low complexity); sequence AAGTTRATET.

It localises to the nucleus. In terms of biological role, transcription factor that regulates the gene cluster that mediates the biosynthesis of compactin, also known as mevastatin or ML-236B, and which acts as a potent competitive inhibitor of HMG-CoA reductase. Binds to the consensus-binding motif 5'-WCGG-N(6)-TCGG-3' of target genes. In Penicillium citrinum, this protein is Transcription factor mlcR.